Consider the following 29-residue polypeptide: Cyclotide vibi-C (29 aa).

Positions 1–29 form a cross-link, cyclopeptide (Gly-Asn); that stretch reads GLPVCGETCAFGSCYTPGCSCSWPVCTRN. Cystine bridges form between Cys-5–Cys-19, Cys-9–Cys-21, and Cys-14–Cys-26.

In terms of processing, this is a cyclic peptide.

In terms of biological role, probably participates in a plant defense mechanism. The sequence is that of Cyclotide vibi-C from Viola biflora (Yellow wood violet).